We begin with the raw amino-acid sequence, 67 residues long: Light-harvesting protein B-870 alpha chain (67 aa).

Position 1 is an N-formylmethionine; in strain DSM 149 and DSM 151 (Met1). The Cytoplasmic portion of the chain corresponds to 1–12; it reads MWRIWRLFDPMR. The chain crosses the membrane as a helical span at residues 13–33; sequence AMVAQAVFLLGLAVLIHLMLL. His29 contacts a bacteriochlorophyll. The Periplasmic portion of the chain corresponds to 34–67; sequence GTNKYNWLDGAKKAPAATAVAPVPAEVTSLAQAK.

This sequence belongs to the antenna complex alpha subunit family. An alpha/beta heterodimer. The core complex is formed by different alpha and beta chains, binding bacteriochlorophyll molecules, and arranged most probably in tetrameric structures disposed around the reaction center. The non-pigmented gamma chains may constitute additional components. Post-translationally, the N-terminus is blocked.

The protein resides in the cell inner membrane. In terms of biological role, antenna complexes are light-harvesting systems, which transfer the excitation energy to the reaction centers. The polypeptide is Light-harvesting protein B-870 alpha chain (pufA) (Rubrivivax gelatinosus (Rhodocyclus gelatinosus)).